The sequence spans 136 residues: MPARRKARKRALDVLFEADLRDRPPVEVLAGYVERLEKPRPEHLGYAVGLVEGIAVHLDRLDELIASYAEGWTLDRMPAVDRNLARIAVYELLYVDEIDDAVAISEAVELARQMSTDDSPRFLNGILGRIAEYATR.

The protein belongs to the NusB family.

Involved in transcription antitermination. Required for transcription of ribosomal RNA (rRNA) genes. Binds specifically to the boxA antiterminator sequence of the ribosomal RNA (rrn) operons. The sequence is that of Transcription antitermination protein NusB from Salinispora arenicola (strain CNS-205).